The primary structure comprises 243 residues: Uridylate kinase (243 aa).

An ATP-binding site is contributed by 15–18; the sequence is KLSG. Residues 23–28 are involved in allosteric activation by GTP; sequence GEEGFG. Gly-57 is a binding site for UMP. 2 residues coordinate ATP: Gly-58 and Arg-62. Residues Asp-77 and 138 to 145 contribute to the UMP site; that span reads TGNPFFTT. 3 residues coordinate ATP: Thr-165, Phe-171, and Asp-174.

Belongs to the UMP kinase family. In terms of assembly, homohexamer.

The protein localises to the cytoplasm. The catalysed reaction is UMP + ATP = UDP + ADP. It functions in the pathway pyrimidine metabolism; CTP biosynthesis via de novo pathway; UDP from UMP (UMPK route): step 1/1. Allosterically activated by GTP. Inhibited by UTP. Catalyzes the reversible phosphorylation of UMP to UDP. This chain is Uridylate kinase, found in Vibrio campbellii (strain ATCC BAA-1116).